A 212-amino-acid polypeptide reads, in one-letter code: dTTP/UTP pyrophosphatase (212 aa).

Asp-88 (proton acceptor) is an active-site residue.

Belongs to the Maf family. YhdE subfamily. The cofactor is a divalent metal cation.

The protein localises to the cytoplasm. It catalyses the reaction dTTP + H2O = dTMP + diphosphate + H(+). The enzyme catalyses UTP + H2O = UMP + diphosphate + H(+). In terms of biological role, nucleoside triphosphate pyrophosphatase that hydrolyzes dTTP and UTP. May have a dual role in cell division arrest and in preventing the incorporation of modified nucleotides into cellular nucleic acids. This Colwellia psychrerythraea (strain 34H / ATCC BAA-681) (Vibrio psychroerythus) protein is dTTP/UTP pyrophosphatase.